The following is a 271-amino-acid chain: ATP synthase subunit a (271 aa).

The next 5 helical transmembrane spans lie at 38-58 (FWTLNIDSMFFSVVLGLLFLA), 100-120 (VIAPLALTVFVWVFLMNLMDL), 146-166 (DVNITLSMALGVFILIIFYSI), 211-231 (LFGNMYAGELIFILIAGLLPW), and 242-262 (AIFHILIITLQAFIFMVLTIV).

Belongs to the ATPase A chain family. In terms of assembly, F-type ATPases have 2 components, CF(1) - the catalytic core - and CF(0) - the membrane proton channel. CF(1) has five subunits: alpha(3), beta(3), gamma(1), delta(1), epsilon(1). CF(0) has three main subunits: a(1), b(2) and c(9-12). The alpha and beta chains form an alternating ring which encloses part of the gamma chain. CF(1) is attached to CF(0) by a central stalk formed by the gamma and epsilon chains, while a peripheral stalk is formed by the delta and b chains.

It localises to the cell inner membrane. Functionally, key component of the proton channel; it plays a direct role in the translocation of protons across the membrane. This Klebsiella pneumoniae (strain 342) protein is ATP synthase subunit a.